Consider the following 97-residue polypeptide: Protein 9b (97 aa).

A 9b domain is found at 8–97 (VPPALHLVDP…PDEFVVVTAK (90 aa)).

As to quaternary structure, homodimer.

The protein localises to the host cytoplasmic vesicle membrane. The protein resides in the host cytoplasm. The polypeptide is Protein 9b (Bat coronavirus 279/2005 (BtCoV)).